A 165-amino-acid chain; its full sequence is Large ribosomal subunit protein uL11 (165 aa).

Position 67 is an N5-methylarginine (Arg-67).

The protein belongs to the universal ribosomal protein uL11 family. As to quaternary structure, component of the large ribosomal subunit (LSU). Mature N.crassa ribosomes consist of a small (40S) and a large (60S) subunit. The 40S small subunit contains 1 molecule of ribosomal RNA (18S rRNA) and at least 32 different proteins. The large 60S subunit contains 3 rRNA molecules (26S, 5.8S and 5S rRNA) and at least 42 different proteins.

It is found in the cytoplasm. Its function is as follows. Component of the ribosome, a large ribonucleoprotein complex responsible for the synthesis of proteins in the cell. The small ribosomal subunit (SSU) binds messenger RNAs (mRNAs) and translates the encoded message by selecting cognate aminoacyl-transfer RNA (tRNA) molecules. The large subunit (LSU) contains the ribosomal catalytic site termed the peptidyl transferase center (PTC), which catalyzes the formation of peptide bonds, thereby polymerizing the amino acids delivered by tRNAs into a polypeptide chain. The nascent polypeptides leave the ribosome through a tunnel in the LSU and interact with protein factors that function in enzymatic processing, targeting, and the membrane insertion of nascent chains at the exit of the ribosomal tunnel. The sequence is that of Large ribosomal subunit protein uL11 (rpl-12) from Neurospora crassa (strain ATCC 24698 / 74-OR23-1A / CBS 708.71 / DSM 1257 / FGSC 987).